We begin with the raw amino-acid sequence, 698 residues long: Probable metal-nicotianamine transporter YSL17 (698 aa).

The segment at 1–36 (MAEEARGGQRVVVDDDREDASSVASSTERAFEGEPL) is disordered. A run of 14 helical transmembrane segments spans residues 43–63 (VTARSAAVSGVLGAVVSVVAM), 67–87 (LTSGLLPSLGVPAGLLGFFLA), 114–134 (IAVVSCSTIAFSGGFGTYILG), 157–177 (IGRVIAFLFLVNFSGLFIIVP), 216–236 (VVTLFKSLGATVLWPIFQWFF), 277–297 (MITASMLAGSIVSWGILWPYI), 322–342 (VFVGVSMILADGLFTILSALV), 395–415 (WVAVASYAALAALSVVAVPLL), 424–444 (VAAAYVAAPVFAFCNAYGVGV), 463–483 (SWVGMDGGGVVAGLAACGIIV), 511–531 (VGQVAGTALGCVVNPAIFWVF), 567–587 (LPDHSVLLCKLFFAMALALSA), 607–627 (IGVAVAFFVPPRIPVGMAVGC), and 644–664 (LLLPAVASGLICGDGLGSLAS).

The protein belongs to the YSL (TC 2.A.67.2) family. Expressed at low levels in roots.

It is found in the membrane. Functionally, may be involved in the transport of nicotianamine-chelated metals. In Oryza sativa subsp. japonica (Rice), this protein is Probable metal-nicotianamine transporter YSL17 (YSL17).